The chain runs to 219 residues: Orotate phosphoribosyltransferase (219 aa).

Residue lysine 26 participates in 5-phospho-alpha-D-ribose 1-diphosphate binding. Phenylalanine 34 to phenylalanine 35 lines the orotate pocket. Residues tyrosine 72–lysine 73, arginine 98, lysine 99, lysine 102, histidine 104, and aspartate 124–alanine 132 each bind 5-phospho-alpha-D-ribose 1-diphosphate. Residues threonine 128 and arginine 156 each coordinate orotate.

It belongs to the purine/pyrimidine phosphoribosyltransferase family. PyrE subfamily. Homodimer. Mg(2+) is required as a cofactor.

The catalysed reaction is orotidine 5'-phosphate + diphosphate = orotate + 5-phospho-alpha-D-ribose 1-diphosphate. The protein operates within pyrimidine metabolism; UMP biosynthesis via de novo pathway; UMP from orotate: step 1/2. In terms of biological role, catalyzes the transfer of a ribosyl phosphate group from 5-phosphoribose 1-diphosphate to orotate, leading to the formation of orotidine monophosphate (OMP). In Stenotrophomonas maltophilia (strain R551-3), this protein is Orotate phosphoribosyltransferase.